The primary structure comprises 189 residues: Large ribosomal subunit protein uL13 (189 aa).

Belongs to the universal ribosomal protein uL13 family.

The protein is Large ribosomal subunit protein uL13 (rpl13a) of Salmo trutta (Brown trout).